A 269-amino-acid polypeptide reads, in one-letter code: Formamidopyrimidine-DNA glycosylase (269 aa).

Catalysis depends on Pro2, which acts as the Schiff-base intermediate with DNA. Glu3 acts as the Proton donor in catalysis. The active-site Proton donor; for beta-elimination activity is the Lys57. DNA is bound by residues His90, Arg109, and Lys150. The FPG-type zinc-finger motif lies at 235–269 (QVYGRAGEPCRQCGHPIEIAKHGQRSTFFCRHCQH). The active-site Proton donor; for delta-elimination activity is the Arg259.

The protein belongs to the FPG family. As to quaternary structure, monomer. The cofactor is Zn(2+).

The enzyme catalyses Hydrolysis of DNA containing ring-opened 7-methylguanine residues, releasing 2,6-diamino-4-hydroxy-5-(N-methyl)formamidopyrimidine.. It carries out the reaction 2'-deoxyribonucleotide-(2'-deoxyribose 5'-phosphate)-2'-deoxyribonucleotide-DNA = a 3'-end 2'-deoxyribonucleotide-(2,3-dehydro-2,3-deoxyribose 5'-phosphate)-DNA + a 5'-end 5'-phospho-2'-deoxyribonucleoside-DNA + H(+). Functionally, involved in base excision repair of DNA damaged by oxidation or by mutagenic agents. Acts as a DNA glycosylase that recognizes and removes damaged bases. Has a preference for oxidized purines, such as 7,8-dihydro-8-oxoguanine (8-oxoG). Has AP (apurinic/apyrimidinic) lyase activity and introduces nicks in the DNA strand. Cleaves the DNA backbone by beta-delta elimination to generate a single-strand break at the site of the removed base with both 3'- and 5'-phosphates. The sequence is that of Formamidopyrimidine-DNA glycosylase from Yersinia pseudotuberculosis serotype O:1b (strain IP 31758).